Reading from the N-terminus, the 261-residue chain is tRNA pseudouridine synthase A (261 aa).

The active-site Nucleophile is the Asp51. Tyr109 serves as a coordination point for substrate.

This sequence belongs to the tRNA pseudouridine synthase TruA family. Homodimer.

The enzyme catalyses uridine(38/39/40) in tRNA = pseudouridine(38/39/40) in tRNA. In terms of biological role, formation of pseudouridine at positions 38, 39 and 40 in the anticodon stem and loop of transfer RNAs. The protein is tRNA pseudouridine synthase A of Shewanella halifaxensis (strain HAW-EB4).